Here is a 352-residue protein sequence, read N- to C-terminus: Protein NDRG4 (352 aa).

3 positions are modified to phosphoserine: Ser298, Ser317, and Ser323. Residues 301 to 352 are disordered; the sequence is AVPSASMTRLARSRTASLTSASSVDGSRPQPCTHSDSSEGMGQVNHTMEVSC. A compositionally biased stretch (low complexity) spans 308–323; it reads TRLARSRTASLTSASS. The segment covering 330-352 has biased composition (polar residues); the sequence is QPCTHSDSSEGMGQVNHTMEVSC.

It belongs to the NDRG family. As to expression, expressed in the brain and heart, weakly in the kidney; most prominently in postnatal brain where it is expressed widely in the olfactory bulb, cerebral cortex, hippocampus, cerebellum, thalamus, and medulla oblongata.

The protein resides in the cytoplasm. It is found in the cytosol. Functionally, contributes to the maintenance of intracerebral BDNF levels within the normal range, which is necessary for the preservation of spatial learning and the resistance to neuronal cell death caused by ischemic stress. May enhance growth factor-induced ERK1 and ERK2 phosphorylation, including that induced by NGF. May attenuate NGF-promoted ELK1 phosphorylation in a microtubule-dependent manner. In Rattus norvegicus (Rat), this protein is Protein NDRG4 (Ndrg4).